A 265-amino-acid chain; its full sequence is Glutamate racemase (265 aa).

Substrate is bound by residues 12–13 and 44–45; these read DS and YG. C75 acts as the Proton donor/acceptor in catalysis. Substrate is bound at residue 76-77; sequence NT. Residue C186 is the Proton donor/acceptor of the active site. A substrate-binding site is contributed by 187-188; that stretch reads TH.

The protein belongs to the aspartate/glutamate racemases family.

It catalyses the reaction L-glutamate = D-glutamate. The protein operates within cell wall biogenesis; peptidoglycan biosynthesis. Provides the (R)-glutamate required for cell wall biosynthesis. This Pseudomonas putida (strain ATCC 700007 / DSM 6899 / JCM 31910 / BCRC 17059 / LMG 24140 / F1) protein is Glutamate racemase.